A 178-amino-acid chain; its full sequence is Cysteine-rich venom protein VAR3 (178 aa).

The signal sequence occupies residues 1–22 (MILLKLYLTLAAILCQSRGTTS). The SCP domain occupies 41–169 (NKHNDLRRTV…PLKYFLVCQY (129 aa)). 3 cysteine pairs are disulfide-bonded: Cys77/Cys156, Cys95/Cys170, and Cys151/Cys167.

It belongs to the CRISP family. Contains 8 disulfide bonds. As to expression, expressed by the venom gland.

It is found in the secreted. Blocks ryanodine receptors, and potassium channels. The sequence is that of Cysteine-rich venom protein VAR3 from Varanus acanthurus (Ridge-tailed monitor).